We begin with the raw amino-acid sequence, 213 residues long: Uridine kinase (213 aa).

Residue 15–22 (GASASGKS) coordinates ATP.

The protein belongs to the uridine kinase family.

Its subcellular location is the cytoplasm. The catalysed reaction is uridine + ATP = UMP + ADP + H(+). It carries out the reaction cytidine + ATP = CMP + ADP + H(+). It participates in pyrimidine metabolism; CTP biosynthesis via salvage pathway; CTP from cytidine: step 1/3. The protein operates within pyrimidine metabolism; UMP biosynthesis via salvage pathway; UMP from uridine: step 1/1. The protein is Uridine kinase of Cronobacter sakazakii (strain ATCC BAA-894) (Enterobacter sakazakii).